The following is a 321-amino-acid chain: DNA repair and recombination protein RadA (321 aa).

111 to 118 provides a ligand contact to ATP; it reads GEFGSGKT.

This sequence belongs to the eukaryotic RecA-like protein family.

In terms of biological role, involved in DNA repair and in homologous recombination. Binds and assemble on single-stranded DNA to form a nucleoprotein filament. Hydrolyzes ATP in a ssDNA-dependent manner and promotes DNA strand exchange between homologous DNA molecules. The protein is DNA repair and recombination protein RadA of Sulfolobus acidocaldarius (strain ATCC 33909 / DSM 639 / JCM 8929 / NBRC 15157 / NCIMB 11770).